Here is a 110-residue protein sequence, read N- to C-terminus: Snake venom vascular endothelial growth factor toxin HF (110 aa).

Q1 is subject to Pyrrolidone carboxylic acid. Disulfide bonds link C14-C56, C45-C91, and C49-C93.

The protein belongs to the PDGF/VEGF growth factor family. Snake venom VEGF subfamily. Homodimer; disulfide-linked. Interacts with VEGF receptor-2 (KDR) with high affinity. As to expression, expressed by the venom gland.

It localises to the secreted. Snake venom VEGFs that may contribute to venom dispersion and prey subjugation by inducing vascular permeability and hypotension. This protein induces an increase in capillary permeability after intradermal injection, as well as a drastic hypotensive effect after intravenous injection. The hypotension is mediated by nitric oxide (NO), which is produced by VEGF-activated endothelium NO synthase. Also induces angiogenesis in vitro, probably through VEGF receptor (KDR/VEGFR-2) signaling. The sequence is that of Snake venom vascular endothelial growth factor toxin HF from Vipera aspis aspis (Aspic viper).